The following is a 220-amino-acid chain: Ribosome maturation factor RimP (220 aa).

The interval 173–220 (KKDKEERRQRKKARRRGEKGGVGDDGTAGEEQPDSAREGPARSASEGE) is disordered.

It belongs to the RimP family.

The protein resides in the cytoplasm. In terms of biological role, required for maturation of 30S ribosomal subunits. The protein is Ribosome maturation factor RimP of Chelativorans sp. (strain BNC1).